The following is a 1451-amino-acid chain: Murinoglobulin-2 (1451 aa).

Positions 1–27 (MWKSRRAQLCLFSVLLAFLPSASSLNG) are cleaved as a signal peptide. 3 disulfides stabilise this stretch: C48–C86, C251–C276, and C269–C288. Residue N55 is glycosylated (N-linked (GlcNAc...) asparagine). N-linked (GlcNAc...) asparagine glycans are attached at residues N294, N313, and N500. 3 disulfides stabilise this stretch: C461–C555, C587–C773, and C634–C680. The interval 677–734 (PKICFDSAPMSGPRGKFDLAFSSEVSGTLQKGSSKRPQPEEPPREDPPPKDPLAETIR) is bait region. The disordered stretch occupies residues 703 to 728 (GTLQKGSSKRPQPEEPPREDPPPKDP). Over residues 713 to 728 (PQPEEPPREDPPPKDP) the composition is skewed to basic and acidic residues. Residues N749, N776, and N871 are each glycosylated (N-linked (GlcNAc...) asparagine). Cystine bridges form between C849–C885, C923–C1274, C1081–C1104, and C1298–C1444. Positions 974 to 977 (CGEQ) form a cross-link, isoglutamyl cysteine thioester (Cys-Gln). N-linked (GlcNAc...) asparagine glycosylation occurs at N1401.

Belongs to the protease inhibitor I39 (alpha-2-macroglobulin) family. In terms of assembly, monomer. In terms of tissue distribution, plasma.

It localises to the secreted. Functionally, a proteinase activates the inhibitor by specific proteolysis in the bait region, which, by an unknown mechanism leads to reaction at the cysteinyl-glutamyl internal thiol ester site and to a conformational change, whereby the proteinase is trapped and/or covalently bound to the inhibitor. While in the tetrameric proteinase inhibitors steric inhibition is sufficiently strong, monomeric forms need a covalent linkage between the activated glutamyl residue of the original thiol ester and a terminal amino group of a lysine or another nucleophilic group on the proteinase, for inhibition to be effective. This chain is Murinoglobulin-2 (Mug2), found in Mus musculus (Mouse).